The sequence spans 481 residues: Phosphoglycerate kinase, chloroplastic (481 aa).

The N-terminal 75 residues, 1–75, are a transit peptide targeting the chloroplast; sequence MASATASHTL…SSKPIRGVAS (75 aa). (2R)-3-phosphoglycerate-binding residues include Ala98, Asp99, Asn101, Arg115, Ser137, His138, Gly140, Arg141, Arg196, His228, and Arg229. Gly274 contacts ADP. Gly274 contacts CDP. Positions 276 and 280 each coordinate AMP. Lys280 provides a ligand contact to ATP. An ADP-binding site is contributed by Gly298. Gly298 serves as a coordination point for CDP. Residues Gly299 and Gly371 each coordinate AMP. The ATP site is built by Gly299 and Gly371. The CDP site is built by Gly396 and Phe401. Position 401 (Phe401) interacts with ADP. Glu402 is an AMP binding site. 3 residues coordinate ATP: Glu402, Asp433, and Ser434. Mg(2+) is bound at residue Asp433.

Belongs to the phosphoglycerate kinase family. As to quaternary structure, monomer. The cofactor is Mg(2+).

The protein resides in the plastid. It localises to the chloroplast. It catalyses the reaction (2R)-3-phosphoglycerate + ATP = (2R)-3-phospho-glyceroyl phosphate + ADP. Its pathway is carbohydrate biosynthesis; Calvin cycle. The protein is Phosphoglycerate kinase, chloroplastic of Nicotiana tabacum (Common tobacco).